Reading from the N-terminus, the 301-residue chain is Small ribosomal subunit protein uS3 (301 aa).

Residues 39 to 107 (VREYLKAKLK…PVAVNIEEVR (69 aa)) enclose the KH type-2 domain. The segment at 211–301 (GESPGAKLDA…AAAADGTKTE (91 aa)) is disordered. Over residues 224–244 (DEERKPRGPRRDARPGSDRPA) the composition is skewed to basic and acidic residues. The segment covering 245–257 (PRGARAPRAPAGG) has biased composition (low complexity).

The protein belongs to the universal ribosomal protein uS3 family. As to quaternary structure, part of the 30S ribosomal subunit. Forms a tight complex with proteins S10 and S14.

In terms of biological role, binds the lower part of the 30S subunit head. Binds mRNA in the 70S ribosome, positioning it for translation. The polypeptide is Small ribosomal subunit protein uS3 (Polaromonas sp. (strain JS666 / ATCC BAA-500)).